A 137-amino-acid chain; its full sequence is Insulin-like peptide 2 (137 aa).

A signal peptide spans 1 to 26; the sequence is MSKPLSFISMVAVILLASSTVKLAQG. 3 disulfides stabilise this stretch: Cys29-Cys119, Cys41-Cys132, and Cys118-Cys123. Positions 53 to 104 are cleaved as a propeptide — connecting peptide; the sequence is AMPGADSDLDALNPLQFVQEFEEEDNSISEPLRSALFPGSYLGGVLNSLAEV.

Belongs to the insulin family. Heterodimer of a B chain and an A chain linked by two disulfide bonds. In terms of tissue distribution, broadly expressed at a low level in the embryonic mesoderm, beginning at stage 12. Expressed at a high level in the embryonic anterior midgut, with expression diminishing at late stage 16. Expressed at a low level in larval imaginal disks. Expressed at a high level in larval salivary glands and in seven cells of each larval brain hemisphere that may correspond to neurosecretory cells.

Its subcellular location is the secreted. In terms of biological role, possible ligand of InR/insulin-like receptor. Its function is as follows. Plays a role in regulating body size by increasing cell size and cell number of individual organs. Probably mediates its growth effects by acting as a ligand for the insulin receptor and transducing a signal via the Chico/PI3K/Akt(PKB) pathway. This Drosophila melanogaster (Fruit fly) protein is Insulin-like peptide 2.